Reading from the N-terminus, the 447-residue chain is Cysteine--tRNA ligase (447 aa).

Cys-28 contributes to the Zn(2+) binding site. The 'HIGH' region signature appears at 30–40; the sequence is PTVYNYIHIGN. Zn(2+) contacts are provided by Cys-211, His-236, and Glu-240. Positions 268 to 272 match the 'KMSKS' region motif; that stretch reads KMSKS. An ATP-binding site is contributed by Lys-271.

This sequence belongs to the class-I aminoacyl-tRNA synthetase family. In terms of assembly, monomer. Requires Zn(2+) as cofactor.

Its subcellular location is the cytoplasm. The enzyme catalyses tRNA(Cys) + L-cysteine + ATP = L-cysteinyl-tRNA(Cys) + AMP + diphosphate. The chain is Cysteine--tRNA ligase from Streptococcus agalactiae serotype V (strain ATCC BAA-611 / 2603 V/R).